The following is a 110-amino-acid chain: Large ribosomal subunit protein uL22 (110 aa).

This sequence belongs to the universal ribosomal protein uL22 family. In terms of assembly, part of the 50S ribosomal subunit.

Functionally, this protein binds specifically to 23S rRNA; its binding is stimulated by other ribosomal proteins, e.g. L4, L17, and L20. It is important during the early stages of 50S assembly. It makes multiple contacts with different domains of the 23S rRNA in the assembled 50S subunit and ribosome. The globular domain of the protein is located near the polypeptide exit tunnel on the outside of the subunit, while an extended beta-hairpin is found that lines the wall of the exit tunnel in the center of the 70S ribosome. The chain is Large ribosomal subunit protein uL22 from Variovorax paradoxus (strain S110).